We begin with the raw amino-acid sequence, 202 residues long: ATP-dependent Clp protease proteolytic subunit 2 (202 aa).

The Nucleophile role is filled by S99. The active site involves H124.

Belongs to the peptidase S14 family. Fourteen ClpP subunits assemble into 2 heptameric rings which stack back to back to give a disk-like structure with a central cavity, resembling the structure of eukaryotic proteasomes.

It is found in the cytoplasm. It catalyses the reaction Hydrolysis of proteins to small peptides in the presence of ATP and magnesium. alpha-casein is the usual test substrate. In the absence of ATP, only oligopeptides shorter than five residues are hydrolyzed (such as succinyl-Leu-Tyr-|-NHMec, and Leu-Tyr-Leu-|-Tyr-Trp, in which cleavage of the -Tyr-|-Leu- and -Tyr-|-Trp bonds also occurs).. Its function is as follows. Cleaves peptides in various proteins in a process that requires ATP hydrolysis. Has a chymotrypsin-like activity. Plays a major role in the degradation of misfolded proteins. This Desulfitobacterium hafniense (strain Y51) protein is ATP-dependent Clp protease proteolytic subunit 2.